A 154-amino-acid polypeptide reads, in one-letter code: Deoxyuridine 5'-triphosphate nucleotidohydrolase (154 aa).

Substrate-binding positions include 64 to 66 (RSG), Asn77, 81 to 83 (TVD), and Lys91.

Belongs to the dUTPase family. As to quaternary structure, homotrimer. Mg(2+) serves as cofactor.

The catalysed reaction is dUTP + H2O = dUMP + diphosphate + H(+). It participates in pyrimidine metabolism; dUMP biosynthesis; dUMP from dCTP (dUTP route): step 2/2. In terms of biological role, this enzyme is involved in nucleotide metabolism: it produces dUMP, the immediate precursor of thymidine nucleotides and it decreases the intracellular concentration of dUTP so that uracil cannot be incorporated into DNA. The protein is Deoxyuridine 5'-triphosphate nucleotidohydrolase of Mycobacterium leprae (strain Br4923).